The primary structure comprises 130 residues: Holo-[acyl-carrier-protein] synthase (130 aa).

Positions 9 and 58 each coordinate Mg(2+).

It belongs to the P-Pant transferase superfamily. AcpS family. Requires Mg(2+) as cofactor.

It localises to the cytoplasm. The catalysed reaction is apo-[ACP] + CoA = holo-[ACP] + adenosine 3',5'-bisphosphate + H(+). Functionally, transfers the 4'-phosphopantetheine moiety from coenzyme A to a Ser of acyl-carrier-protein. The polypeptide is Holo-[acyl-carrier-protein] synthase (Mycolicibacterium paratuberculosis (strain ATCC BAA-968 / K-10) (Mycobacterium paratuberculosis)).